The sequence spans 284 residues: 4-diphosphocytidyl-2-C-methyl-D-erythritol kinase (284 aa).

Lysine 14 is an active-site residue. Residue 98–108 (PMGGGLGGGSS) participates in ATP binding. Aspartate 140 is a catalytic residue.

It belongs to the GHMP kinase family. IspE subfamily.

The enzyme catalyses 4-CDP-2-C-methyl-D-erythritol + ATP = 4-CDP-2-C-methyl-D-erythritol 2-phosphate + ADP + H(+). Its pathway is isoprenoid biosynthesis; isopentenyl diphosphate biosynthesis via DXP pathway; isopentenyl diphosphate from 1-deoxy-D-xylulose 5-phosphate: step 3/6. In terms of biological role, catalyzes the phosphorylation of the position 2 hydroxy group of 4-diphosphocytidyl-2C-methyl-D-erythritol. The protein is 4-diphosphocytidyl-2-C-methyl-D-erythritol kinase of Shewanella sp. (strain MR-7).